Reading from the N-terminus, the 128-residue chain is Otoraplin (128 aa).

An N-terminal signal peptide occupies residues 1–18 (MARILILLLGGLVVLCAG). Disulfide bonds link Cys32/Cys37 and Cys55/Cys127. The region spanning 39–110 (YTISLARAQE…PSNLVKEQRV (72 aa)) is the SH3 domain.

The protein belongs to the MIA/OTOR family. In terms of tissue distribution, highly expressed in cochlea.

The protein resides in the secreted. This Mus musculus (Mouse) protein is Otoraplin (Otor).